A 793-amino-acid chain; its full sequence is DNA mismatch repair protein MutS (793 aa).

589-596 (GPNMSGKS) provides a ligand contact to ATP.

Belongs to the DNA mismatch repair MutS family.

This protein is involved in the repair of mismatches in DNA. It is possible that it carries out the mismatch recognition step. This protein has a weak ATPase activity. The sequence is that of DNA mismatch repair protein MutS from Thermotoga petrophila (strain ATCC BAA-488 / DSM 13995 / JCM 10881 / RKU-1).